The sequence spans 97 residues: Bacterial microcompartment shell protein EutM (97 aa).

Residues 3–87 enclose the BMC domain; sequence ALGMIETRGL…PHGDLEEVFP (85 aa).

This sequence belongs to the bacterial microcompartments protein family. Homohexamer with a central pore of up to 8.6 Angstroms diameter. The hexamers pack into a two-dimensional array. Interacts with EutQ.

It localises to the bacterial microcompartment. The protein operates within amine and polyamine degradation; ethanolamine degradation. Functionally, probably a major component of the bacterial microcompartment (BMC) shell dedicated to ethanolamine degradation. Each homohexamer has a central pore with an opening of up to 8.6 Angstroms. A positively-charged funnel leads to the pore from each side of the hexamer. The pore probably allows metabolite passage into and out of the BMC. The polypeptide is Bacterial microcompartment shell protein EutM (eutM) (Escherichia coli O6:H1 (strain CFT073 / ATCC 700928 / UPEC)).